The chain runs to 282 residues: N-acetylaspartate synthetase (282 aa).

Residues 103 to 125 (FLTVMCYVMTKSFTLTFCAPFIL) form a helical membrane-spanning segment. Positions 110 to 269 (VMTKSFTLTF…RSPLERLFFQ (160 aa)) constitute an N-acetyltransferase domain.

Belongs to the NAT8 family.

It is found in the cytoplasm. The protein resides in the microsome membrane. The protein localises to the mitochondrion membrane. Its subcellular location is the endoplasmic reticulum membrane. It catalyses the reaction L-aspartate + acetyl-CoA = N-acetyl-L-aspartate + CoA + H(+). In terms of biological role, catalyzes the synthesis of N-acetylaspartate acid (NAA) from L-aspartate and acetyl-CoA. This is N-acetylaspartate synthetase (nat8l) from Danio rerio (Zebrafish).